The primary structure comprises 368 residues: Quinolinate synthase (368 aa).

2 residues coordinate iminosuccinate: H46 and S63. C110 provides a ligand contact to [4Fe-4S] cluster. Residues 141–143 (YVN) and S162 each bind iminosuccinate. Position 230 (C230) interacts with [4Fe-4S] cluster. Iminosuccinate is bound by residues 256-258 (HPE) and T273. C320 contacts [4Fe-4S] cluster.

It belongs to the quinolinate synthase family. Type 3 subfamily. In terms of assembly, homotrimer. [4Fe-4S] cluster is required as a cofactor.

The protein resides in the cytoplasm. The catalysed reaction is iminosuccinate + dihydroxyacetone phosphate = quinolinate + phosphate + 2 H2O + H(+). It functions in the pathway cofactor biosynthesis; NAD(+) biosynthesis; quinolinate from iminoaspartate: step 1/1. In terms of biological role, catalyzes the condensation of iminoaspartate with dihydroxyacetone phosphate to form quinolinate. This chain is Quinolinate synthase, found in Bacillus subtilis (strain 168).